The sequence spans 339 residues: MAAEDELQLPRLPELFETGRQLLDEVEVATEPAGSRIVQEKVFKGLDLLEKAAEMLSQLDLFSRNEDLEEIASTDLKYLLVPAFQGALTMKQVNPSKRLDHLQRAREHFINYLTQCHCYHVAEFELPKTMNNSAENHTANSSMAYPSLVAMASQRQAKIQRYKQKKELEHRLSAMKSAVESGQADDERVREYYLLHLQRWIDISLEEIESIDQEIKILRERDSSREASTSNSSRQERPPVKPFILTRNMAQAKVFGAGYPSLPTMTVSDWYEQHRKYGALPDQGIAKAAPEEFRKAAQQQEEQEEKEEEDDEQTLHRAREWDDWKDTHPRGYGNRQNMG.

Ala-2 carries the post-translational modification N-acetylalanine. The UIM domain occupies 46–60 (LDLLEKAAEMLSQLD). Positions 98-202 (RLDHLQRARE…YLLHLQRWID (105 aa)) are interaction with PPP2CA. Disordered stretches follow at residues 221–243 (RDSS…VKPF) and 289–339 (APEE…QNMG). The interval 225-290 (REASTSNSSR…PDQGIAKAAP (66 aa)) is interaction with MID1. An N6-acetyllysine modification is found at Lys-241. Over residues 301–312 (EEQEEKEEEDDE) the composition is skewed to acidic residues. Basic and acidic residues predominate over residues 313 to 329 (QTLHRAREWDDWKDTHP).

Belongs to the IGBP1/TAP42 family. As to quaternary structure, interacts with partially folded PPP2CA, but not with the fully active protein. Interacts with PPP2CB, and with PP4 and PP6. Interacts with MID1 and MID2. Interacts with ubiquitin. Post-translationally, phosphorylated. Monoubiquitination by MID1 triggers calpain-mediated cleavage and switches IGBP1 activity from protective to destructive. In terms of tissue distribution, ubiquitously expressed with highest levels in heart, skeletal muscle and pancreas.

It is found in the cytoplasm. Associated to surface IgM-receptor; may be involved in signal transduction. Involved in regulation of the catalytic activity of the phosphatases PP2A, PP4 and PP6 by protecting their partially folded catalytic subunits from degradative polyubiquitination until they associate with regulatory subunits. In Homo sapiens (Human), this protein is Immunoglobulin-binding protein 1 (IGBP1).